A 306-amino-acid polypeptide reads, in one-letter code: Cytochrome P450 monooxygenase aclO (306 aa).

Position 237 (C237) interacts with heme.

The protein belongs to the cytochrome P450 family. The cofactor is heme.

The protein operates within mycotoxin biosynthesis. Cytochrome P450 monooxygenase; part of the gene cluster that mediates the biosynthesis of aspirochlorine (or antibiotic A30641), an unusual halogenated spiro compound with distinctive antifungal properties due to selective inhibition of protein biosynthesis, and which is also active against bacteria, viruses, and murine tumor cells. The non-ribosomal peptide synthetase (NRPS) aclP is responsible the formation of the diketopiperazine (DKP) core from the condensation of 2 phenylalanine residues. One Phe residue is tailored into chlorotyrosine by hydroxylation and chlorination, whereas the second Phe undergoes an unprecedented C-C bond cleavage to be converted into glycine. After formation of the DKP, sulfur is incorporated into the DKP by conjugation with glutathione by aclG, followed by its stepwise degradation to the thiol by aclI, aclJ and aclK, and the dithiol oxidation by aclT. In addition, oxygenases (aclB, aclC, aclL and aclO) and O-methyltransferases (aclM and aclU) act as tailoring enzymes to produce the intermediate dechloroaspirochlorine. Ultimately, chlorination of dechloroaspirochlorine by the halogenase aclH is the last step in the aspirochlorine pathway. This chain is Cytochrome P450 monooxygenase aclO, found in Aspergillus oryzae (strain ATCC 42149 / RIB 40) (Yellow koji mold).